A 264-amino-acid chain; its full sequence is Phosphonoacetaldehyde hydrolase (264 aa).

The active-site Nucleophile is D9. The Mg(2+) site is built by D9 and A11. Residue K50 is the Schiff-base intermediate with substrate of the active site. A Mg(2+)-binding site is contributed by D183.

Belongs to the HAD-like hydrolase superfamily. PhnX family. Homodimer. Mg(2+) is required as a cofactor.

The enzyme catalyses phosphonoacetaldehyde + H2O = acetaldehyde + phosphate + H(+). Functionally, involved in phosphonate degradation. This chain is Phosphonoacetaldehyde hydrolase, found in Bacillus cereus (strain AH820).